The primary structure comprises 164 residues: V-type proton ATPase subunit c' (164 aa).

Over 1–15 (MTDDLVNEYAPAFAP) the chain is Lumenal. Residues 16–36 (FFGFAGCAAAMILSSLGAAIG) form a helical membrane-spanning segment. At 37 to 58 (TAKSGIGISGIGTFRPELIMKS) the chain is on the cytoplasmic side. The chain crosses the membrane as a helical span at residues 59–79 (LIPVVMSGILAVYGLVVAVLV). The Lumenal segment spans residues 80–97 (AGGLSPTEEYTLFNGFMH). Residues 98–118 (LAAGLCVGFACLSSGYAIGIV) traverse the membrane as a helical segment. At 119-135 (GDVGVRKFMHQPRLFVG) the chain is on the cytoplasmic side. The chain crosses the membrane as a helical span at residues 136–156 (IVLILIFAEVLGLYGMIIALI). Residues 157 to 164 (LNTRGSGN) lie on the Lumenal side of the membrane.

It belongs to the V-ATPase proteolipid subunit family. As to quaternary structure, V-ATPase is a heteromultimeric enzyme composed of a peripheral catalytic V1 complex (components A to H) attached to an integral membrane V0 proton pore complex (components: a, c, c', c'', d, e, f and VOA1). The decameric c-ring forms the proton-conducting pore, and is composed of eight proteolipid subunits c, one subunit c' and one subunit c''.

The protein localises to the vacuole membrane. Functionally, proton-conducting pore forming subunit of the V0 complex of vacuolar(H+)-ATPase (V-ATPase), a multisubunit enzyme composed of a peripheral complex (V1) that hydrolyzes ATP and a membrane integral complex (V0) that translocates protons. V-ATPase is responsible for acidifying and maintaining the pH of intracellular compartments. The protein is V-type proton ATPase subunit c' (VMA11) of Eremothecium gossypii (strain ATCC 10895 / CBS 109.51 / FGSC 9923 / NRRL Y-1056) (Yeast).